Consider the following 526-residue polypeptide: MFSLQDLCRKHLFILPDVFGEHVLQQLGLYWEKHGSLQRIGNDHILIRRDLILSINEALKIAAEEGNNEVVKLLLLWKGNLHYAIIGALEGDQYDLIYTYENQIEDYHHILPLIQDAKTFEKCHALERFCDVPCLLEHAIKHNMLPILQKYQEELFIRVYLRETLFELACLWQRYDILKWIEQTMHVYDLKIIFNIAISKRDLSMYSLGYVLLFDRGNTEATLLTQHLEKTAAKGLLHFVLETLKYGGNINIVLSQAVKYNHRKLLDYFLRQLPRKNIEKLLLLAVQEKASKKTLNLLLSYLNYSVKRIKKLLRYVIEYESTLVIRILLKKRINLIDAVLEKTVRYFSETKVKTIMDELSINPEKVIKMAIQKMRTDIVIQTSYIWEDDLERLIRLKNMVYTIKYEHGKKMLMKVIHGIYKNLLHDEKEKVMFHLAKFYIAQNAATQFRDICKDCCKLDVARFKPRFKQLILDCLDIITKKTCLNIMEILENHIISLFAMKMMTEDEKNLGLELLYKVISYKMISY.

It belongs to the asfivirus MGF 505 family.

In terms of biological role, plays a role in virus cell tropism, and may be required for efficient virus replication in macrophages. This is Protein MGF 505-2R from African swine fever virus (isolate Pig/Kenya/KEN-50/1950) (ASFV).